The sequence spans 513 residues: ATP synthase subunit alpha (513 aa).

169–176 (GDRQIGKT) contacts ATP.

This sequence belongs to the ATPase alpha/beta chains family. As to quaternary structure, F-type ATPases have 2 components, CF(1) - the catalytic core - and CF(0) - the membrane proton channel. CF(1) has five subunits: alpha(3), beta(3), gamma(1), delta(1), epsilon(1). CF(0) has three main subunits: a(1), b(2) and c(9-12). The alpha and beta chains form an alternating ring which encloses part of the gamma chain. CF(1) is attached to CF(0) by a central stalk formed by the gamma and epsilon chains, while a peripheral stalk is formed by the delta and b chains.

Its subcellular location is the cell inner membrane. It catalyses the reaction ATP + H2O + 4 H(+)(in) = ADP + phosphate + 5 H(+)(out). Produces ATP from ADP in the presence of a proton gradient across the membrane. The alpha chain is a regulatory subunit. The chain is ATP synthase subunit alpha from Vibrio alginolyticus.